The sequence spans 311 residues: Porphobilinogen deaminase (311 aa).

Cysteine 242 is subject to S-(dipyrrolylmethanemethyl)cysteine.

Belongs to the HMBS family. As to quaternary structure, monomer. It depends on dipyrromethane as a cofactor.

The enzyme catalyses 4 porphobilinogen + H2O = hydroxymethylbilane + 4 NH4(+). Its pathway is porphyrin-containing compound metabolism; protoporphyrin-IX biosynthesis; coproporphyrinogen-III from 5-aminolevulinate: step 2/4. Its function is as follows. Tetrapolymerization of the monopyrrole PBG into the hydroxymethylbilane pre-uroporphyrinogen in several discrete steps. In Hahella chejuensis (strain KCTC 2396), this protein is Porphobilinogen deaminase.